The sequence spans 123 residues: Sterol carrier protein 2 (123 aa).

An SCP2 domain is found at 16 to 113; the sequence is KEHLSTDAGK…GSLSAAQKFT (98 aa). The short motif at 121–123 is the Microbody targeting signal element; it reads SKL.

As to expression, expressed in most tissues including seedlings, cotyledons, inflorescence, leaves, stems, roots, siliques and flower buds, with the highest levels in floral tissues and in maturing seeds.

The protein resides in the peroxisome. Its function is as follows. Enhances the transfer of lipids between membranes in vitro. Active on phosphatidylcholine (PC), 1-palmitoyl 2-oleoyl phosphatidylcholine (POPC) and ergosterol, and, to a lower extent, dimyristoyl phosphatidic acid, stigmasterol, desmosterol, beta-sitosterol and steryl glucoside. Inactive or poorly active on palmitic acid, stearoyl-coenzyme A, cholesterol, glucosylceramide and ceramide. Required during seeds and seedlings development. This is Sterol carrier protein 2 from Arabidopsis thaliana (Mouse-ear cress).